A 778-amino-acid chain; its full sequence is Phenylalanine--tRNA ligase beta subunit (778 aa).

One can recognise a tRNA-binding domain in the interval Tyr39–Ser150. The B5 domain maps to His391–Ser467. Positions 445, 451, 454, and 455 each coordinate Mg(2+). The FDX-ACB domain maps to Ser686–Arg778.

Belongs to the phenylalanyl-tRNA synthetase beta subunit family. Type 1 subfamily. Tetramer of two alpha and two beta subunits. Requires Mg(2+) as cofactor.

It localises to the cytoplasm. The catalysed reaction is tRNA(Phe) + L-phenylalanine + ATP = L-phenylalanyl-tRNA(Phe) + AMP + diphosphate + H(+). In Sulfurimonas denitrificans (strain ATCC 33889 / DSM 1251) (Thiomicrospira denitrificans (strain ATCC 33889 / DSM 1251)), this protein is Phenylalanine--tRNA ligase beta subunit.